The following is a 239-amino-acid chain: Aspartate/glutamate leucyltransferase (239 aa).

Belongs to the R-transferase family. Bpt subfamily.

Its subcellular location is the cytoplasm. The catalysed reaction is N-terminal L-glutamyl-[protein] + L-leucyl-tRNA(Leu) = N-terminal L-leucyl-L-glutamyl-[protein] + tRNA(Leu) + H(+). The enzyme catalyses N-terminal L-aspartyl-[protein] + L-leucyl-tRNA(Leu) = N-terminal L-leucyl-L-aspartyl-[protein] + tRNA(Leu) + H(+). Its function is as follows. Functions in the N-end rule pathway of protein degradation where it conjugates Leu from its aminoacyl-tRNA to the N-termini of proteins containing an N-terminal aspartate or glutamate. The sequence is that of Aspartate/glutamate leucyltransferase from Campylobacter jejuni (strain RM1221).